The chain runs to 252 residues: Chaperone protein AggD (252 aa).

The first 22 residues, 1–22 (MKIRRIVSTIAIALSVFTFAHA), serve as a signal peptide directing secretion.

It belongs to the periplasmic pilus chaperone family.

Its subcellular location is the periplasm. Functionally, involved in the biogenesis of the AAF/I fimbriae. The chain is Chaperone protein AggD (aggD) from Escherichia coli.